The primary structure comprises 209 residues: MAQQDVKPTRSELINLKKKIKLSESGHKLLKMKRDGLILEFFKILNEARNVRTELDAAYEKSTEKINLASAVNGMVAVKSTAFTAKEYPEIQLSGHNIMGVVVPKISSTGVRKPLYERGYGIIGTNSYIDETADAYEELVEKIIAAAELETTMKRLLDEIEKTKRRVNALEFKVIPELIATMKYIRFMLEEMERENTFRLKRVKARMKN.

The protein belongs to the V-ATPase D subunit family. Has multiple subunits with at least A(3), B(3), C, D, E, F, H, I and proteolipid K(x).

The protein localises to the cell membrane. In terms of biological role, component of the A-type ATP synthase that produces ATP from ADP in the presence of a proton gradient across the membrane. This chain is A-type ATP synthase subunit D, found in Methanosarcina acetivorans (strain ATCC 35395 / DSM 2834 / JCM 12185 / C2A).